A 243-amino-acid chain; its full sequence is Undecaprenyl-phosphate mannosyltransferase (243 aa).

This sequence belongs to the glycosyltransferase 2 family.

It catalyses the reaction di-trans,octa-cis-undecaprenyl phosphate + GDP-alpha-D-mannose = D-mannosyl di-trans,octa-cis-undecaprenyl phosphate + GDP. Catalyzes the transfer of mannose from GDP-mannose to D-mannosyl-1-phosphoundecaprenol. The protein is Undecaprenyl-phosphate mannosyltransferase of Micrococcus luteus (strain ATCC 4698 / DSM 20030 / JCM 1464 / CCM 169 / CCUG 5858 / IAM 1056 / NBRC 3333 / NCIMB 9278 / NCTC 2665 / VKM Ac-2230) (Micrococcus lysodeikticus).